Reading from the N-terminus, the 967-residue chain is Serine/threonine-protein kinase 10 (967 aa).

2 positions are modified to phosphoserine: S13 and S20. The Protein kinase domain maps to 36–294 (WEILGELGDG…AAQLLQHPFV (259 aa)). Residues 42–50 (LGDGAFGKV) and K65 each bind ATP. D157 (proton acceptor) is an active-site residue. The segment at 175–224 (DFGVSAKNLKTLQKRDSFIGTPYWMAPEVVLCETMKDAPYDYKADIWSLG) is activation segment. A Phosphothreonine; by autocatalysis modification is found at T185. S191 is modified (phosphoserine; by autocatalysis). Disordered regions lie at residues 317–454 (EIED…RPNS) and 468–498 (GGLE…SMDY). Polar residues-rich tracts occupy residues 339–364 (NHTQ…DSST), 378–393 (PCNQ…NTSP), and 431–454 (TDQA…RPNS). Residues S438, S450, S454, and S485 each carry the phosphoserine modification. Positions 486–498 (DCSNLSTSESMDY) are enriched in polar residues. S514 and S549 each carry phosphoserine. 2 disordered regions span residues 827–866 (INGA…ENQM) and 902–967 (LDES…GDAS). 2 stretches are compositionally biased toward basic and acidic residues: residues 835 to 866 (EQRE…ENQM) and 902 to 947 (LDES…EAET). T951 carries the post-translational modification Phosphothreonine.

It belongs to the protein kinase superfamily. STE Ser/Thr protein kinase family. STE20 subfamily. Homodimer; homodimerization is required for activation segment autophosphorylation. Post-translationally, autophosphorylates following homodimerization, leading to activation of the protein.

The protein resides in the cell membrane. It carries out the reaction L-seryl-[protein] + ATP = O-phospho-L-seryl-[protein] + ADP + H(+). The catalysed reaction is L-threonyl-[protein] + ATP = O-phospho-L-threonyl-[protein] + ADP + H(+). Its activity is regulated as follows. Inhibited by the pyrrole-indolinone inhibitor SU11274 (K00593): intercalates between the ATP-binding Lys-65 and alpha-C glutamate (Glu-81), resulting in a partial disordering of the lysine side chain. Also specifically inhibited by erlotinib. Slightly inhibited by gefitinib. Functionally, serine/threonine-protein kinase involved in regulation of lymphocyte migration. Phosphorylates MSN, and possibly PLK1. Involved in regulation of lymphocyte migration by mediating phosphorylation of ERM proteins such as MSN. Acts as a negative regulator of MAP3K1/MEKK1. May also act as a cell cycle regulator by acting as a polo kinase kinase: mediates phosphorylation of PLK1 in vitro; however such data require additional evidences in vivo. This is Serine/threonine-protein kinase 10 (Stk10) from Rattus norvegicus (Rat).